A 229-amino-acid chain; its full sequence is DNA mismatch repair protein MutH (229 aa).

This sequence belongs to the MutH family.

The protein resides in the cytoplasm. Functionally, sequence-specific endonuclease that cleaves unmethylated GATC sequences. It is involved in DNA mismatch repair. This chain is DNA mismatch repair protein MutH, found in Shigella flexneri.